Here is a 349-residue protein sequence, read N- to C-terminus: DNA replication and repair protein RecF (349 aa).

Residue 30–37 (GKNGSGKT) participates in ATP binding.

The protein belongs to the RecF family.

Its subcellular location is the cytoplasm. The RecF protein is involved in DNA metabolism; it is required for DNA replication and normal SOS inducibility. RecF binds preferentially to single-stranded, linear DNA. It also seems to bind ATP. This is DNA replication and repair protein RecF from Francisella tularensis subsp. novicida (strain U112).